Consider the following 93-residue polypeptide: Stage III sporulation protein D (93 aa).

In terms of domain architecture, HTH deoR-type spans 4-75 (YIKERTIKIG…IRHLRGGEAT (72 aa)). Residues 21-40 (KTVRVIAKEFGVSKSTVHKD) constitute a DNA-binding region (H-T-H motif).

Functionally, this protein regulates the transcription of sigK, which encodes mother cell chamber RNA polymerase sigma-factor (sigma K). This chain is Stage III sporulation protein D (spoIIID), found in Bacillus subtilis (strain 168).